We begin with the raw amino-acid sequence, 513 residues long: Activin receptor type-2A (513 aa).

The first 19 residues, 1-19 (MGAAAKLAFAVFLISCSSG), serve as a signal peptide directing secretion. Residues 20-135 (AILGRSETQE…TSNPVTPKPP (116 aa)) lie on the Extracellular side of the membrane. 5 disulfide bridges follow: Cys30-Cys60, Cys50-Cys78, Cys85-Cys104, Cys91-Cys103, and Cys105-Cys110. Asn43 and Asn66 each carry an N-linked (GlcNAc...) asparagine glycan. A helical membrane pass occupies residues 136 to 161 (YYNILLYSLVPLMLIAGIVICAFWVY). Residues 162 to 513 (RHHKMAYPPV…VDFPPKESSL (352 aa)) lie on the Cytoplasmic side of the membrane. One can recognise a Protein kinase domain in the interval 192–485 (LQLLEVKARG…GERITQMQRL (294 aa)). ATP-binding positions include 198–206 (KARGRFGCV) and Lys219. Asp322 acts as the Proton acceptor in catalysis.

This sequence belongs to the protein kinase superfamily. TKL Ser/Thr protein kinase family. TGFB receptor subfamily. In terms of assembly, part of a complex consisting of MAGI2/ARIP1, ACVR2A, ACVR1B and SMAD3. Interacts with MAGI2/ARIP1. Interacts with type I receptor ACVR1. Interacts with BMP7. Interacts with TSC22D1/TSC-22. Interacts with activin A/INHBA. Mg(2+) serves as cofactor. Mn(2+) is required as a cofactor.

It localises to the cell membrane. The catalysed reaction is L-threonyl-[receptor-protein] + ATP = O-phospho-L-threonyl-[receptor-protein] + ADP + H(+). It carries out the reaction L-seryl-[receptor-protein] + ATP = O-phospho-L-seryl-[receptor-protein] + ADP + H(+). On ligand binding, forms a receptor complex consisting of two type II and two type I transmembrane serine/threonine kinases. Type II receptors phosphorylate and activate type I receptors which autophosphorylate, then bind and activate SMAD transcriptional regulators. Receptor for activin A, activin B and inhibin A. Mediates induction of adipogenesis by GDF6. The chain is Activin receptor type-2A (ACVR2A) from Bos taurus (Bovine).